The primary structure comprises 1181 residues: Integrin alpha-7 (1181 aa).

A signal peptide spans 1–33 (MAGARSRDPWGASGICYLFGSLLVELLFSRAVA). Topologically, residues 34-1082 (FNLDVMGALR…MAVVAEGVPW (1049 aa)) are extracellular. FG-GAP repeat units follow at residues 35–103 (NLDV…ETDC), 110–175 (QGAD…IRDE), 185–238 (EGRP…SADL), 292–349 (DRLP…ASRL), 350–411 (VPEV…HWAG), 412–467 (ISPL…GVVA), and 471–530 (QVLE…IAPR). Residue N86 is glycosylated (N-linked (GlcNAc...) asparagine). Disulfide bonds link C94-C103, C140-C163, and C184-C197. Residues D372, N374, D376, D380, D434, N436, D438, D442, D492, D494, N496, Y498, and D500 each coordinate Ca(2+). Disulfide bonds link C539–C546, C552–C615, C681–C687, C781–C792, C939–C994, and C1001–C1006. An N-linked (GlcNAc...) asparagine glycan is attached at N786. Over residues 950–961 (VDSRDRRRRELE) the composition is skewed to basic and acidic residues. Positions 950 to 978 (VDSRDRRRRELEPPEQQEPGERQEPSMSW) are disordered. N989 is a glycosylation site (N-linked (GlcNAc...) asparagine). Residues N1025 and N1045 are each glycosylated (N-linked (GlcNAc...) asparagine). A helical transmembrane segment spans residues 1083–1103 (WVILLAVLAGLLVLALLVLLL). Residues 1104-1181 (WKMGFFKRAK…PDGHPGPGTA (78 aa)) lie on the Cytoplasmic side of the membrane. Positions 1107–1111 (GFFKR) match the GFFKR motif motif. The interval 1138–1181 (EKTGTILRNNWGSPRREGPDAHPILAADGHPELGPDGHPGPGTA) is disordered. 3 consecutive repeat copies span residues 1157–1160 (DAHP), 1165–1168 (DGHP), and 1173–1176 (DGHP). The tract at residues 1157–1176 (DAHPILAADGHPELGPDGHP) is 3 X 4 AA repeats of D-X-H-P.

It belongs to the integrin alpha chain family. As to quaternary structure, heterodimer of an alpha and a beta subunit. The alpha subunit is composed of a heavy and a light chain linked by a disulfide bond. Alpha-7 associates with beta-1. Interacts with COMP. Interacts (via C-terminus intracellular tail region) with CIB1; the interaction is stabilized/increased in a calcium- and magnesium-dependent manner. Post-translationally, ADP-ribosylated on at least two sites of the extracellular domain in skeletal myotubes. A 70 kDa form is created by proteolytic cleavage. Cleavage is elevated during myogenic differentiation and the cleaved form enhances cell adhesion and spreading on laminin. As to expression, isoforms containing segment A are predominantly expressed in skeletal muscle. Isoforms containing segment B are abundantly expressed in skeletal muscle, moderately in cardiac muscle, small intestine, colon, ovary and prostate and weakly in lung and testes. Isoforms containing segment X2D are expressed at low levels in fetal and adult skeletal muscle and in cardiac muscle, but are not detected in myoblasts and myotubes. In muscle fibers isoforms containing segment A and B are expressed at myotendinous and neuromuscular junctions; isoforms containing segment C are expressed at neuromuscular junctions and at extrasynaptic sites. Isoforms containing segments X1 or X2 or, at low levels, X1X2 are expressed in fetal and adult skeletal muscle (myoblasts and myotubes) and cardiac muscle.

It is found in the membrane. Integrin alpha-7/beta-1 is the primary laminin receptor on skeletal myoblasts and adult myofibers. During myogenic differentiation, it may induce changes in the shape and mobility of myoblasts, and facilitate their localization at laminin-rich sites of secondary fiber formation. It is involved in the maintenance of the myofibers cytoarchitecture as well as for their anchorage, viability and functional integrity. Isoform Alpha-7X2B and isoform Alpha-7X1B promote myoblast migration on laminin 1 and laminin 2/4, but isoform Alpha-7X1B is less active on laminin 1 (In vitro). Acts as a Schwann cell receptor for laminin-2. Acts as a receptor of COMP and mediates its effect on vascular smooth muscle cells (VSMCs) maturation. Required to promote contractile phenotype acquisition in differentiated airway smooth muscle (ASM) cells. In Homo sapiens (Human), this protein is Integrin alpha-7 (ITGA7).